A 242-amino-acid chain; its full sequence is ATP synthase subunit a (242 aa).

5 helical membrane-spanning segments follow: residues 21 to 41 (LASV…AIVC), 83 to 103 (AVTL…FAIV), 118 to 137 (ATVT…YYGI), 175 to 195 (LYGN…LFFE), and 198 to 218 (AWGW…SIFV).

The protein belongs to the ATPase A chain family. As to quaternary structure, F-type ATPases have 2 components, CF(1) - the catalytic core - and CF(0) - the membrane proton channel. CF(1) has five subunits: alpha(3), beta(3), gamma(1), delta(1), epsilon(1). CF(0) has three main subunits: a(1), b(2) and c(9-12). The alpha and beta chains form an alternating ring which encloses part of the gamma chain. CF(1) is attached to CF(0) by a central stalk formed by the gamma and epsilon chains, while a peripheral stalk is formed by the delta and b chains.

The protein resides in the cell membrane. Key component of the proton channel; it plays a direct role in the translocation of protons across the membrane. The chain is ATP synthase subunit a from Staphylococcus epidermidis (strain ATCC 35984 / DSM 28319 / BCRC 17069 / CCUG 31568 / BM 3577 / RP62A).